The following is a 473-amino-acid chain: MKTDTPSLEIPQAARLRRRQLIRQLLERDKTPLAILFMAAVVGTLVGLAAVAFDKGVSWLQNQRMGALVHTADNYPLLLTVAFLCSAVLAMFGYFLVRKYAPEAGGSGIPEIEGALEDQRPVRWWRVLPVKFFGGLGTLGGGMVLGREGPTVQIGGNIGRMVLDIFRLKGDEARHTLLATGAAAGLAAAFNAPLAGILFIIEEMRPQFRYTLISIKAVFIGVIMSTIMYRIFNHEVALIDVGKLSDAPLNTLWLYLILGIIFGIFGPIFNKWVLGMQDLLHRVHGGNITKWVIMGGAIGGLCGLLGFVAPATSGGGFNLIPIATAGNFSMGMLVFIFVARVITTLLCFSSGAPGGIFAPMLALGTVLGTAFGMVAVELFPQYHLEAGTFAIAGMGALLAASIRAPLTGIILVLEMTDNYQLILPMIITGLGATLLAQFTGGKPLYSAILARTLAKQEAEQLARSKAASASENT.

Residues 1-32 (MKTDTPSLEIPQAARLRRRQLIRQLLERDKTP) are Cytoplasmic-facing. Residues 33–69 (LAILFMAAVVGTLVGLAAVAFDKGVSWLQNQRMGALV) form a helical membrane-spanning segment. Residues 70-76 (HTADNYP) lie on the Periplasmic side of the membrane. A helical membrane pass occupies residues 77–100 (LLLTVAFLCSAVLAMFGYFLVRKY). Positions 106 to 110 (GSGIP) match the Selectivity filter part_1 motif. Serine 107 provides a ligand contact to chloride. An intramembrane region (helical) is located at residues 109–116 (IPEIEGAL). Residues 117-123 (EDQRPVR) are Cytoplasmic-facing. 2 helical membrane passes run 124–141 (WWRV…TLGG) and 148–166 (EGPT…LDIF). Positions 146 to 150 (GREGP) match the Selectivity filter part_2 motif. Residues 167–176 (RLKGDEARHT) are Cytoplasmic-facing. 2 intramembrane regions (helical) span residues 177 to 189 (LLAT…LAAA) and 193 to 201 (PLAGILFII). Residues 202–214 (EEMRPQFRYTLIS) lie on the Cytoplasmic side of the membrane. A helical membrane pass occupies residues 215–232 (IKAVFIGVIMSTIMYRIF). Over 233 to 252 (NHEVALIDVGKLSDAPLNTL) the chain is Periplasmic. A helical membrane pass occupies residues 253-281 (WLYLILGIIFGIFGPIFNKWVLGMQDLLH). Residues 282 to 287 (RVHGGN) are Cytoplasmic-facing. The helical transmembrane segment at 288–309 (ITKWVIMGGAIGGLCGLLGFVA) threads the bilayer. Residues 310–329 (PATSGGGFNLIPIATAGNFS) lie on the Periplasmic side of the membrane. The next 2 membrane-spanning stretches (helical) occupy residues 330-349 (MGML…LCFS) and 355-376 (GIFA…MVAV). The short motif at 355-359 (GIFAP) is the Selectivity filter part_3 element. Residues isoleucine 356 and phenylalanine 357 each contribute to the chloride site. Over 377–386 (ELFPQYHLEA) the chain is Periplasmic. Residues 387 to 401 (GTFAIAGMGALLAAS) constitute an intramembrane region (helical). Residues 402 to 404 (IRA) constitute an intramembrane region (note=Loop between two helices). The helical intramembrane region spans 405-416 (PLTGIILVLEMT). Positions 417–421 (DNYQL) form an intramembrane region, note=Loop between two helices. A helical membrane pass occupies residues 422–438 (ILPMIITGLGATLLAQF). Over 439–473 (TGGKPLYSAILARTLAKQEAEQLARSKAASASENT) the chain is Cytoplasmic. Residue tyrosine 445 participates in chloride binding.

The protein belongs to the chloride channel (TC 2.A.49) family. ClcA subfamily. In terms of assembly, homodimer.

The protein resides in the cell inner membrane. The enzyme catalyses 2 chloride(in) + H(+)(out) = 2 chloride(out) + H(+)(in). Proton-coupled chloride transporter. Functions as antiport system and exchanges two chloride ions for 1 proton. Probably acts as an electrical shunt for an outwardly-directed proton pump that is linked to amino acid decarboxylation, as part of the extreme acid resistance (XAR) response. This is H(+)/Cl(-) exchange transporter ClcA from Escherichia fergusonii (strain ATCC 35469 / DSM 13698 / CCUG 18766 / IAM 14443 / JCM 21226 / LMG 7866 / NBRC 102419 / NCTC 12128 / CDC 0568-73).